The sequence spans 90 residues: DNA-binding protein HU (90 aa).

This sequence belongs to the bacterial histone-like protein family. In terms of assembly, homodimer.

Its function is as follows. Histone-like DNA-binding protein which is capable of wrapping DNA to stabilize it, and thus to prevent its denaturation under extreme environmental conditions. The sequence is that of DNA-binding protein HU (hup) from Pasteurella multocida (strain Pm70).